A 364-amino-acid polypeptide reads, in one-letter code: Mannonate dehydratase (364 aa).

It belongs to the mannonate dehydratase family. The cofactor is Fe(2+). Mn(2+) is required as a cofactor.

It carries out the reaction D-mannonate = 2-dehydro-3-deoxy-D-gluconate + H2O. Its pathway is carbohydrate metabolism; pentose and glucuronate interconversion. Catalyzes the dehydration of D-mannonate. This is Mannonate dehydratase from Endomicrobium trichonymphae.